We begin with the raw amino-acid sequence, 650 residues long: Flap endonuclease 1 (650 aa).

The N-domain stretch occupies residues 1 to 106 (MGIKGLTKFI…SELEKRGEKR (106 aa)). Asp-34 lines the Mg(2+) pocket. Residues Arg-47 and Arg-72 each contribute to the DNA site. Residues Asp-88, Glu-160, Glu-162, Asp-181, and Asp-183 each contribute to the Mg(2+) site. Residues 124-266 (EIKKQSGRTV…KTAYNLIKEY (143 aa)) form an I-domain region. Glu-160 contacts DNA. DNA contacts are provided by Gly-244 and Asp-246. Asp-246 serves as a coordination point for Mg(2+). An interaction with PCNA region spans residues 349 to 357 (TQRRLDNFF). The tract at residues 371 to 592 (ETKKEQTLPA…NSYNNIKNNN (222 aa)) is disordered. Basic and acidic residues-rich tracts occupy residues 413 to 469 (MKEE…KKSL), 478 to 502 (DSDKESESGNIIKNEKQNMDDEKIN), and 511 to 524 (DHSRIRHTENKDNI). Over residues 525–562 (SDINNNNNNNNNNSSSNNNNISNNHFNSVSSNSTFNSS) the composition is skewed to low complexity. Over residues 565–581 (LKSEDTLKSNSPLKEDS) the composition is skewed to basic and acidic residues. The span at 582 to 592 (PNSYNNIKNNN) shows a compositional bias: low complexity.

It belongs to the XPG/RAD2 endonuclease family. FEN1 subfamily. Interacts with PCNA1 and PCNA2. Three molecules of FEN1 bind to one PCNA trimer with each molecule binding to one PCNA monomer. PCNA stimulates the nuclease activity without altering cleavage specificity. Requires Mg(2+) as cofactor. Post-translationally, phosphorylated. Phosphorylation upon DNA damage induces relocalization to the nuclear plasma.

The protein localises to the nucleus. It is found in the nucleolus. Its subcellular location is the nucleoplasm. It localises to the mitochondrion. Its activity is regulated as follows. Inhibited by monovalent metal ions. Structure-specific nuclease with 5'-flap endonuclease and 5'-3' exonuclease activities involved in DNA replication and repair. During DNA replication, cleaves the 5'-overhanging flap structure that is generated by displacement synthesis when DNA polymerase encounters the 5'-end of a downstream Okazaki fragment. It enters the flap from the 5'-end and then tracks to cleave the flap base, leaving a nick for ligation. Also involved in the long patch base excision repair (LP-BER) pathway, by cleaving within the apurinic/apyrimidinic (AP) site-terminated flap. Acts as a genome stabilization factor that prevents flaps from equilibrating into structures that lead to duplications and deletions. Also possesses 5'-3' exonuclease activity on nicked or gapped double-stranded DNA, and exhibits RNase H activity. Also involved in replication and repair of rDNA and in repairing mitochondrial DNA. In Plasmodium falciparum, this protein is Flap endonuclease 1.